The sequence spans 55 residues: Large ribosomal subunit protein bL33 (55 aa).

It belongs to the bacterial ribosomal protein bL33 family.

The protein is Large ribosomal subunit protein bL33 of Ruegeria sp. (strain TM1040) (Silicibacter sp.).